Here is a 113-residue protein sequence, read N- to C-terminus: Small ribosomal subunit protein mS41 (113 aa).

The transit peptide at 1 to 22 (MLILKRIFIIRNFIFPFSNCRY) directs the protein to the mitochondrion.

It belongs to the mitochondrion-specific ribosomal protein mS41 family. Component of the mitochondrial small ribosomal subunit (mt-SSU). Mature yeast 74S mitochondrial ribosomes consist of a small (37S) and a large (54S) subunit. The 37S small subunit contains a 15S ribosomal RNA (15S mt-rRNA) and at least 32 different proteins. The 54S large subunit contains a 21S rRNA (21S mt-rRNA) and at least 45 different proteins.

The protein localises to the mitochondrion. Its function is as follows. Component of the mitochondrial ribosome (mitoribosome), a dedicated translation machinery responsible for the synthesis of mitochondrial genome-encoded proteins, including at least some of the essential transmembrane subunits of the mitochondrial respiratory chain. The mitoribosomes are attached to the mitochondrial inner membrane and translation products are cotranslationally integrated into the membrane. mS41 is involved in telomere length regulation. This is Small ribosomal subunit protein mS41 (fyv4) from Schizosaccharomyces pombe (strain 972 / ATCC 24843) (Fission yeast).